A 211-amino-acid chain; its full sequence is Large ribosomal subunit protein uL3 (211 aa).

It belongs to the universal ribosomal protein uL3 family. Part of the 50S ribosomal subunit. Forms a cluster with proteins L14 and L19.

In terms of biological role, one of the primary rRNA binding proteins, it binds directly near the 3'-end of the 23S rRNA, where it nucleates assembly of the 50S subunit. In Trichlorobacter lovleyi (strain ATCC BAA-1151 / DSM 17278 / SZ) (Geobacter lovleyi), this protein is Large ribosomal subunit protein uL3.